Here is a 303-residue protein sequence, read N- to C-terminus: Formylglycine-generating enzyme (303 aa).

Ca(2+) is bound by residues N188, I189, D202, Y204, N222, V223, G225, and V227. Cu(+)-binding residues include C269 and C274.

This sequence belongs to the sulfatase-modifying factor family. Cu(+) serves as cofactor.

It catalyses the reaction L-cysteinyl-[sulfatase] + 2 a thiol + O2 = an organic disulfide + 3-oxo-L-alanyl-[sulfatase] + hydrogen sulfide + H2O + H(+). It functions in the pathway protein modification; sulfatase oxidation. In terms of biological role, oxidase that catalyzes the conversion of cysteine to 3-oxoalanine on target proteins. 3-oxoalanine modification, which is also named formylglycine (fGly), occurs in the maturation of arylsulfatases and some alkaline phosphatases that use the hydrated form of 3-oxoalanine as a catalytic nucleophile. The chain is Formylglycine-generating enzyme from Thermomonospora curvata (strain ATCC 19995 / DSM 43183 / JCM 3096 / KCTC 9072 / NBRC 15933 / NCIMB 10081 / Henssen B9).